The following is a 126-amino-acid chain: Phosphoribosyl-AMP cyclohydrolase (126 aa).

D76 contributes to the Mg(2+) binding site. C77 serves as a coordination point for Zn(2+). Residues D78 and D80 each contribute to the Mg(2+) site. C94 and C101 together coordinate Zn(2+).

Belongs to the PRA-CH family. As to quaternary structure, homodimer. Mg(2+) is required as a cofactor. The cofactor is Zn(2+).

Its subcellular location is the cytoplasm. It carries out the reaction 1-(5-phospho-beta-D-ribosyl)-5'-AMP + H2O = 1-(5-phospho-beta-D-ribosyl)-5-[(5-phospho-beta-D-ribosylamino)methylideneamino]imidazole-4-carboxamide. It functions in the pathway amino-acid biosynthesis; L-histidine biosynthesis; L-histidine from 5-phospho-alpha-D-ribose 1-diphosphate: step 3/9. In terms of biological role, catalyzes the hydrolysis of the adenine ring of phosphoribosyl-AMP. The protein is Phosphoribosyl-AMP cyclohydrolase of Vesicomyosocius okutanii subsp. Calyptogena okutanii (strain HA).